A 93-amino-acid polypeptide reads, in one-letter code: Em protein H5 (93 aa).

Residues 1 to 93 (MASGQQERSE…IDESKFKTKS (93 aa)) are disordered. Basic and acidic residues-rich tracts occupy residues 7 to 19 (ERSE…REGE), 32 to 62 (EAQE…EMGR), and 73 to 93 (GGER…KTKS).

It belongs to the small hydrophilic plant seed protein family.

Its function is as follows. It is thought to provide protection for the cytoplasm during the desiccation stage of embryo development. This chain is Em protein H5 (EMH5), found in Triticum aestivum (Wheat).